An 82-amino-acid chain; its full sequence is MVIDTSALVAMLNDEPEAQRFEIAVAADHVWLMSTASYPEMATVIETRFGEPGGREPKVSGQPLLYKGDDFACIDIRAVLAG.

D4 serves as a coordination point for Mg(2+).

It belongs to the PINc/VapC protein family. The cofactor is Mg(2+).

In terms of biological role, toxic component of a possible type II toxin-antitoxin (TA) system. A putative RNase. Its cognate antitoxin is VapB34. This Mycobacterium tuberculosis (strain CDC 1551 / Oshkosh) protein is Putative ribonuclease VapC34 (vapC34).